The sequence spans 593 residues: Arginine--tRNA ligase (593 aa).

The 'HIGH' region signature appears at proline 123–histidine 133.

It belongs to the class-I aminoacyl-tRNA synthetase family. In terms of assembly, monomer.

It is found in the cytoplasm. The enzyme catalyses tRNA(Arg) + L-arginine + ATP = L-arginyl-tRNA(Arg) + AMP + diphosphate. This chain is Arginine--tRNA ligase, found in Phenylobacterium zucineum (strain HLK1).